The chain runs to 805 residues: RFX-like transcription factor daf-19 (805 aa).

Residues 1–14 (MTNEEPVPSTSSVL) show a composition bias toward polar residues. The interval 1 to 113 (MTNEEPVPST…TPRKKMEPED (113 aa)) is disordered. Over residues 19-92 (KNVKIETPSR…DSKSLSKETH (74 aa)) the composition is skewed to basic and acidic residues. Residues 93 to 104 (NTISTRSSSSGT) show a composition bias toward polar residues. Residues 260-334 (TVNWLFENYE…YHYYGIRLKD (75 aa)) constitute a DNA-binding region (RFX-type winged-helix).

The protein belongs to the RFX family. As to expression, ciliated sensory neurons. Expressed in the male tail HOB and RnB neurons but not in male-specific CEM head neurons or other ciliated neurons.

It localises to the nucleus. Its function is as follows. Probable transcription factor. May regulate some genes of ciliated sensory neurons. May activate the expression of the shared components of sensory cilia, but not the cell-type-specific expression. Together with transcription factor atf-7, involved in regulation of the serotonergic response of ADF neurons to pathogenic food. Functionally, involved in male mating behavior; may play a role in functional specialization of PKD ciliated sensory neurons. The sequence is that of RFX-like transcription factor daf-19 from Caenorhabditis elegans.